The chain runs to 434 residues: Chaperone SurA (434 aa).

The signal sequence occupies residues 1-22 (MKPSKHLIFALFALAISQPTMA). PpiC domains lie at 173 to 274 (DVEY…KIMD) and 283 to 383 (IEEV…QLEE).

It is found in the periplasm. The enzyme catalyses [protein]-peptidylproline (omega=180) = [protein]-peptidylproline (omega=0). In terms of biological role, chaperone involved in the correct folding and assembly of outer membrane proteins. Recognizes specific patterns of aromatic residues and the orientation of their side chains, which are found more frequently in integral outer membrane proteins. May act in both early periplasmic and late outer membrane-associated steps of protein maturation. The chain is Chaperone SurA from Shewanella oneidensis (strain ATCC 700550 / JCM 31522 / CIP 106686 / LMG 19005 / NCIMB 14063 / MR-1).